A 200-amino-acid chain; its full sequence is Nascent polypeptide-associated complex subunit alpha (200 aa).

Residues 1-19 (MADPRIEELPDEETKKPTV) are compositionally biased toward basic and acidic residues. Disordered regions lie at residues 1-52 (MADP…SRNE) and 120-165 (QQLA…EDKD). Residues 20 to 34 (EELDESSDEESDAEA) show a composition bias toward acidic residues. The region spanning 49-114 (SRNEKKARKA…AKIEDLNASA (66 aa)) is the NAC-A/B domain. Residues 127–143 (AEHDHAGHTHDHKHEAA) show a composition bias toward basic and acidic residues. Positions 144–160 (KEEEEEEDDGEEVDAEG) are enriched in acidic residues. The region spanning 161–200 (IEDKDIELVMTQANVSRKKAIKALKENDNDIVNSIMALSV) is the UBA domain.

This sequence belongs to the NAC-alpha family. Part of the nascent polypeptide-associated complex (NAC), consisting of EGD2 and EGD1. NAC associates with ribosomes via EGD1.

Its subcellular location is the cytoplasm. The protein resides in the nucleus. In terms of biological role, component of the nascent polypeptide-associated complex (NAC), a dynamic component of the ribosomal exit tunnel, protecting the emerging polypeptides from interaction with other cytoplasmic proteins to ensure appropriate nascent protein targeting. The NAC complex also promotes mitochondrial protein import by enhancing productive ribosome interactions with the outer mitochondrial membrane and blocks the inappropriate interaction of ribosomes translating non-secretory nascent polypeptides with translocation sites in the membrane of the endoplasmic reticulum. EGD2 may also be involved in transcription regulation. This is Nascent polypeptide-associated complex subunit alpha (EGD2) from Chaetomium globosum (strain ATCC 6205 / CBS 148.51 / DSM 1962 / NBRC 6347 / NRRL 1970) (Soil fungus).